Consider the following 850-residue polypeptide: Bifunctional levopimaradiene synthase, chloroplastic (850 aa).

Residues 1–52 (MALPSSSLSSQIHTGATTQCIPHFHGSLNAGTSAGKRRSLYLRWGKGPSKIV) constitute a chloroplast transit peptide. K250 provides a ligand contact to substrate. The Mg(2+) site is built by D383 and D385. The DXDD motif signature appears at 383 to 386 (DIDD). Residue K470 coordinates substrate. 5 residues coordinate Mg(2+): D602, D606, N746, T750, and E754. Positions 602-606 (DDLYD) match the DDXXD motif motif.

The protein belongs to the terpene synthase family. Tpsd subfamily. Requires Mg(2+) as cofactor. As to expression, expressed in young tissues such as flushing buds and green bark tissues. Lower levels in mature needles and bark.

The protein localises to the plastid. It localises to the chloroplast. It carries out the reaction (2E,6E,10E)-geranylgeranyl diphosphate = (+)-copalyl diphosphate. The enzyme catalyses (+)-copalyl diphosphate = abieta-8(14),12-diene + diphosphate. It catalyses the reaction (+)-copalyl diphosphate = neoabietadiene + diphosphate. Its pathway is terpene metabolism; oleoresin biosynthesis. Its function is as follows. Involved in defensive oleoresin formation in conifers in response to insect attack or other injury. Involved in diterpene (C20) olefins biosynthesis. Bifunctional enzyme that catalyzes two sequential cyclizations of geranylgeranyl diphosphate (GGPP) to levopimaradiene. Levopimaradiene is the major products of the enzyme followed by abietadiene, neoabietadiene and palustradiene. No activity with geranyl diphosphate (GPP) or farnesyl diphosphate (FPP) as substrate. This chain is Bifunctional levopimaradiene synthase, chloroplastic (LPS), found in Pinus taeda (Loblolly pine).